A 30-amino-acid polypeptide reads, in one-letter code: Trypsin inhibitor 1 (30 aa).

Cystine bridges form between C4-C21, C11-C23, and C17-C29.

It belongs to the protease inhibitor I7 (squash-type serine protease inhibitor) family.

The protein resides in the secreted. In terms of biological role, inhibits trypsin. This is Trypsin inhibitor 1 from Momordica charantia (Bitter gourd).